Reading from the N-terminus, the 227-residue chain is Cytidylate kinase (227 aa).

12–20 (GPSGAGKGT) serves as a coordination point for ATP.

Belongs to the cytidylate kinase family. Type 1 subfamily.

It localises to the cytoplasm. The enzyme catalyses CMP + ATP = CDP + ADP. It catalyses the reaction dCMP + ATP = dCDP + ADP. This chain is Cytidylate kinase, found in Shigella boydii serotype 18 (strain CDC 3083-94 / BS512).